A 447-amino-acid polypeptide reads, in one-letter code: Glutamate--tRNA ligase 1 (447 aa).

Positions 10 to 20 match the 'HIGH' region motif; it reads PSPTGMLHVGN. The short motif at 240–244 is the 'KMSKS' region element; the sequence is KISKR. Residue Lys243 participates in ATP binding.

It belongs to the class-I aminoacyl-tRNA synthetase family. Glutamate--tRNA ligase type 1 subfamily. Monomer.

The protein localises to the cytoplasm. It carries out the reaction tRNA(Glu) + L-glutamate + ATP = L-glutamyl-tRNA(Glu) + AMP + diphosphate. In terms of biological role, catalyzes the attachment of glutamate to tRNA(Glu) in a two-step reaction: glutamate is first activated by ATP to form Glu-AMP and then transferred to the acceptor end of tRNA(Glu). In Rickettsia rickettsii (strain Sheila Smith), this protein is Glutamate--tRNA ligase 1.